Reading from the N-terminus, the 283-residue chain is Tyrosine recombinase THA_404 (283 aa).

One can recognise a Core-binding (CB) domain in the interval Met1–Glu86. One can recognise a Tyr recombinase domain in the interval Lys107–Lys281. Residues Arg145, Lys170, His233, Arg236, and His259 contribute to the active site. Tyr268 acts as the O-(3'-phospho-DNA)-tyrosine intermediate in catalysis.

Belongs to the 'phage' integrase family.

It is found in the cytoplasm. Functionally, site-specific tyrosine recombinase, which acts by catalyzing the cutting and rejoining of the recombining DNA molecules. This is Tyrosine recombinase THA_404 from Thermosipho africanus (strain TCF52B).